Here is a 159-residue protein sequence, read N- to C-terminus: Small ribosomal subunit protein uS4 (159 aa).

The 53-residue stretch at 106–158 (RRLQTIVYRKGLAKSIYHARQLVVHGHVAVAGRRVTSPGFLVPRDLEDKITLI) folds into the S4 RNA-binding domain.

The protein belongs to the universal ribosomal protein uS4 family. As to quaternary structure, part of the 30S ribosomal subunit. Contacts protein S5. The interaction surface between S4 and S5 is involved in control of translational fidelity.

Functionally, one of the primary rRNA binding proteins, it binds directly to 16S rRNA where it nucleates assembly of the body of the 30S subunit. With S5 and S12 plays an important role in translational accuracy. The sequence is that of Small ribosomal subunit protein uS4 from Pyrobaculum islandicum (strain DSM 4184 / JCM 9189 / GEO3).